Consider the following 157-residue polypeptide: MSGEVYILWLLSLIQTLSAYGADLSSEACRELGFSSCWGCSSCDLLGEFSLSSIQPVCKQCCQQEVHMESRKLYPGAILEVCGUKLGRFPQVQAFVRSDKPKMFKGLQIKYVRGADPILKLLDDNGNIAEEPSILKWNTDSVEEFLSEKLEVYNTDL.

The first 19 residues, 1-19 (MSGEVYILWLLSLIQTLSA), serve as a signal peptide directing secretion. Position 84 (selenocysteine 84) is a non-standard amino acid, selenocysteine.

This sequence belongs to the selenoprotein M/F family. As to expression, expressed in the brain, liver and retina. Localized to the retinal ganglion cell layer, the inner nuclear layer and the outer nuclear layer at both parr and smolt stages.

Its subcellular location is the endoplasmic reticulum lumen. Functionally, may be involved in redox reactions associated with the formation of disulfide bonds. May contribute to the quality control of protein folding in the endoplasmic reticulum. May be involved in retinal development. The polypeptide is Selenoprotein F (Oncorhynchus mykiss (Rainbow trout)).